The chain runs to 104 residues: MLKPSIDTLLDKVPSKYSLVILQAKRAHELEAGATPTQEFKSVKSTLQALEEIESGNVVIHPDPSAKREAVRAKIEAERLAKEEEERKIKEQIAKEKEEEGEKI.

This sequence belongs to the RNA polymerase subunit omega family. In terms of assembly, the RNAP catalytic core consists of 2 alpha, 1 beta, 1 beta' and 1 omega subunit. When a sigma factor is associated with the core the holoenzyme is formed, which can initiate transcription.

The enzyme catalyses RNA(n) + a ribonucleoside 5'-triphosphate = RNA(n+1) + diphosphate. Its function is as follows. Promotes RNA polymerase assembly. Latches the N- and C-terminal regions of the beta' subunit thereby facilitating its interaction with the beta and alpha subunits. This Streptococcus pyogenes serotype M1 protein is DNA-directed RNA polymerase subunit omega (rpoZ).